We begin with the raw amino-acid sequence, 32 residues long: Cyclotide glopa B (32 aa).

A cross-link (cyclopeptide (Gly-Asn)) is located at residues 1–32; sequence GGSVPCIETCVWTGCFLVPGCSCKSDKKCYLN. Disulfide bonds link Cys-6-Cys-21, Cys-10-Cys-23, and Cys-15-Cys-29.

In terms of processing, this is a cyclic peptide.

In terms of biological role, probably participates in a plant defense mechanism. The sequence is that of Cyclotide glopa B from Gloeospermum pauciflorum.